Reading from the N-terminus, the 212-residue chain is Translation initiation factor IF-3 (212 aa).

A compositionally biased stretch (basic and acidic residues) spans 190 to 203; it reads LVDKNSDSQDKSVS. The tract at residues 190–212 is disordered; that stretch reads LVDKNSDSQDKSVSEEDTNEGEQ.

The protein belongs to the IF-3 family. Monomer.

The protein resides in the cytoplasm. Its function is as follows. IF-3 binds to the 30S ribosomal subunit and shifts the equilibrium between 70S ribosomes and their 50S and 30S subunits in favor of the free subunits, thus enhancing the availability of 30S subunits on which protein synthesis initiation begins. The protein is Translation initiation factor IF-3 of Mycoplasmopsis fermentans (Mycoplasma fermentans).